The sequence spans 417 residues: Serine hydroxymethyltransferase (417 aa).

Residues Leu121 and 125 to 127 (GHL) contribute to the (6S)-5,6,7,8-tetrahydrofolate site. Lys229 bears the N6-(pyridoxal phosphate)lysine mark. Position 355-357 (355-357 (SPF)) interacts with (6S)-5,6,7,8-tetrahydrofolate.

The protein belongs to the SHMT family. Homodimer. Pyridoxal 5'-phosphate is required as a cofactor.

Its subcellular location is the cytoplasm. The enzyme catalyses (6R)-5,10-methylene-5,6,7,8-tetrahydrofolate + glycine + H2O = (6S)-5,6,7,8-tetrahydrofolate + L-serine. It participates in one-carbon metabolism; tetrahydrofolate interconversion. The protein operates within amino-acid biosynthesis; glycine biosynthesis; glycine from L-serine: step 1/1. Functionally, catalyzes the reversible interconversion of serine and glycine with tetrahydrofolate (THF) serving as the one-carbon carrier. This reaction serves as the major source of one-carbon groups required for the biosynthesis of purines, thymidylate, methionine, and other important biomolecules. Also exhibits THF-independent aldolase activity toward beta-hydroxyamino acids, producing glycine and aldehydes, via a retro-aldol mechanism. This is Serine hydroxymethyltransferase from Salmonella choleraesuis (strain SC-B67).